We begin with the raw amino-acid sequence, 206 residues long: Large ribosomal subunit protein uL4 (206 aa).

Belongs to the universal ribosomal protein uL4 family. As to quaternary structure, part of the 50S ribosomal subunit.

One of the primary rRNA binding proteins, this protein initially binds near the 5'-end of the 23S rRNA. It is important during the early stages of 50S assembly. It makes multiple contacts with different domains of the 23S rRNA in the assembled 50S subunit and ribosome. Its function is as follows. Forms part of the polypeptide exit tunnel. The sequence is that of Large ribosomal subunit protein uL4 from Bradyrhizobium sp. (strain ORS 278).